The chain runs to 267 residues: Phosphatidylserine decarboxylase proenzyme (267 aa).

Residues Asp-78, His-132, and Ser-236 each act as charge relay system; for autoendoproteolytic cleavage activity in the active site. Ser-236 serves as the catalytic Schiff-base intermediate with substrate; via pyruvic acid; for decarboxylase activity. Ser-236 carries the post-translational modification Pyruvic acid (Ser); by autocatalysis.

The protein belongs to the phosphatidylserine decarboxylase family. PSD-B subfamily. Prokaryotic type I sub-subfamily. Heterodimer of a large membrane-associated beta subunit and a small pyruvoyl-containing alpha subunit. Requires pyruvate as cofactor. In terms of processing, is synthesized initially as an inactive proenzyme. Formation of the active enzyme involves a self-maturation process in which the active site pyruvoyl group is generated from an internal serine residue via an autocatalytic post-translational modification. Two non-identical subunits are generated from the proenzyme in this reaction, and the pyruvate is formed at the N-terminus of the alpha chain, which is derived from the carboxyl end of the proenzyme. The autoendoproteolytic cleavage occurs by a canonical serine protease mechanism, in which the side chain hydroxyl group of the serine supplies its oxygen atom to form the C-terminus of the beta chain, while the remainder of the serine residue undergoes an oxidative deamination to produce ammonia and the pyruvoyl prosthetic group on the alpha chain. During this reaction, the Ser that is part of the protease active site of the proenzyme becomes the pyruvoyl prosthetic group, which constitutes an essential element of the active site of the mature decarboxylase.

Its subcellular location is the cell membrane. The enzyme catalyses a 1,2-diacyl-sn-glycero-3-phospho-L-serine + H(+) = a 1,2-diacyl-sn-glycero-3-phosphoethanolamine + CO2. It functions in the pathway phospholipid metabolism; phosphatidylethanolamine biosynthesis; phosphatidylethanolamine from CDP-diacylglycerol: step 2/2. Its function is as follows. Catalyzes the formation of phosphatidylethanolamine (PtdEtn) from phosphatidylserine (PtdSer). The polypeptide is Phosphatidylserine decarboxylase proenzyme (Helicobacter pylori (strain Shi470)).